The primary structure comprises 316 residues: CD276 antigen (316 aa).

The first 28 residues, 1–28 (MLRGWGGPSVGVCVRTALGVLCLCLTGA), serve as a signal peptide directing secretion. The Ig-like V-type domain maps to 29–139 (VEVQVSEDPV…DSAAVSLQVA (111 aa)). Residues 29 to 248 (VEVQVSEDPV…GQPLTFPPEA (220 aa)) are Extracellular-facing. Residues Asn-104, Asn-189, and Asn-215 are each glycosylated (N-linked (GlcNAc...) asparagine). In terms of domain architecture, Ig-like C2-type spans 145 to 238 (PSMTLEPNKD…QDAHGSVTIT (94 aa)). The cysteines at positions 165 and 220 are disulfide-linked. Residues 249 to 269 (LWVTVGLSVCLVVLLVALAFV) traverse the membrane as a helical segment. The Cytoplasmic segment spans residues 270 to 316 (CWRKIKQSCEEENAGAEDQDGDGEGSKTALRPLKPSENKEDDGQEIA). Acidic residues predominate over residues 280-292 (EENAGAEDQDGDG). The tract at residues 280–316 (EENAGAEDQDGDGEGSKTALRPLKPSENKEDDGQEIA) is disordered.

Belongs to the immunoglobulin superfamily. BTN/MOG family. Interacts with TREML2 and this interaction enhances T-cell activation. Ubiquitous.

The protein resides in the membrane. Modulates T-cell-mediated immune responses and the development of acute and chronic transplant rejection. Plays a positive regulatory role in bone formation and has a dual role in the bone-immune interface. Induces antitumor immunity as it activates both acquired and innate immunity leading to natural killer cell and CD8 T-cell dependent killing of tumor cells. This chain is CD276 antigen (Cd276), found in Mus musculus (Mouse).